Here is a 286-residue protein sequence, read N- to C-terminus: Single myb histone 5 (286 aa).

Residues 1–61 (MGAPKQRWTS…KWRNMNVIVT (61 aa)) enclose the HTH myb-type domain. The H-T-H motif DNA-binding region spans 28–57 (WRMILNDPELSSTLRYRSNVDLKDKWRNMN). The H15 domain occupies 122–190 (SHSRLDNIIM…KVNRKYRIAP (69 aa)). The stretch at 229–277 (EAAAAAAAHAVAEAEAIMAEAEAAAREAEAAEAEARAAQAFAEAAVLTL) forms a coiled coil.

The protein belongs to the histone H1/H5 family. SMH subfamily. In terms of assembly, forms a homodimer and heterodimers.

The protein resides in the nucleus. Its subcellular location is the chromosome. It localises to the nucleolus. It is found in the telomere. Binds preferentially double-stranded telomeric repeats, but may also bind to the single telomeric strand. This Zea mays (Maize) protein is Single myb histone 5 (SMH5).